A 312-amino-acid chain; its full sequence is Ribosomal RNA small subunit methyltransferase H (312 aa).

S-adenosyl-L-methionine is bound by residues 32 to 34, Asp-52, Phe-79, Asp-100, and Gln-107; that span reads AGH.

The protein belongs to the methyltransferase superfamily. RsmH family.

It localises to the cytoplasm. It carries out the reaction cytidine(1402) in 16S rRNA + S-adenosyl-L-methionine = N(4)-methylcytidine(1402) in 16S rRNA + S-adenosyl-L-homocysteine + H(+). Specifically methylates the N4 position of cytidine in position 1402 (C1402) of 16S rRNA. The polypeptide is Ribosomal RNA small subunit methyltransferase H (Listeria monocytogenes serotype 4b (strain F2365)).